Consider the following 68-residue polypeptide: Large ribosomal subunit protein uL29 (68 aa).

This sequence belongs to the universal ribosomal protein uL29 family.

In Erythrobacter litoralis (strain HTCC2594), this protein is Large ribosomal subunit protein uL29.